Here is a 147-residue protein sequence, read N- to C-terminus: MEREFVMIKPDGVKRGLVGEIISRIERKGLKIVAMKMLKLDREMAERLYEEHKGKPFFDDLISYVTSGPVVAMVVEGPNAVEVMRRMIGDTDGAKAAPGTIRGDFALSKARNVVHATDSPEKVAREMSIFFRDDEIVEGYELCHSIY.

Lysine 9, phenylalanine 57, arginine 85, threonine 91, arginine 102, and asparagine 112 together coordinate ATP. The active-site Pros-phosphohistidine intermediate is histidine 115.

It belongs to the NDK family. Mg(2+) is required as a cofactor.

It is found in the cytoplasm. The catalysed reaction is a 2'-deoxyribonucleoside 5'-diphosphate + ATP = a 2'-deoxyribonucleoside 5'-triphosphate + ADP. It carries out the reaction a ribonucleoside 5'-diphosphate + ATP = a ribonucleoside 5'-triphosphate + ADP. In terms of biological role, major role in the synthesis of nucleoside triphosphates other than ATP. The ATP gamma phosphate is transferred to the NDP beta phosphate via a ping-pong mechanism, using a phosphorylated active-site intermediate. The protein is Nucleoside diphosphate kinase of Ignicoccus hospitalis (strain KIN4/I / DSM 18386 / JCM 14125).